The primary structure comprises 489 residues: Dipeptide and tripeptide permease B (489 aa).

At 1 to 27 (MNTTAPTGLLQQPRPFFMIFFVELWER) the chain is on the cytoplasmic side. Residues 28 to 48 (FGYYGVQGILAVFFVKQLGFS) form a helical membrane-spanning segment. The Periplasmic segment spans residues 49-52 (QEQA). The chain crosses the membrane as a helical span at residues 53-73 (FITFGAFAALVYGLISIGGYV). Residues 74–82 (GDHLLGTKR) lie on the Cytoplasmic side of the membrane. The chain crosses the membrane as a helical span at residues 83–103 (TLVLGAIVLAIGYFMTGMSLL). At 104–106 (NPD) the chain is on the periplasmic side. A helical transmembrane segment spans residues 107–127 (LIFIALGTIAVGNGLFKANPA). Residues 128–146 (SLLSKCYQPKDPRLDGAFT) lie on the Cytoplasmic side of the membrane. The helical transmembrane segment at 147-167 (LFYMSINIGSLLSLSLAPVIA) threads the bilayer. Over 168-172 (DKFGY) the chain is Periplasmic. Residues 173 to 193 (AVTYNLCGAGLIVALLVYFAC) form a helical membrane-spanning segment. Residues 194-214 (RGMVKNIGSEPDHKPLRFRNL) are Cytoplasmic-facing. The helical transmembrane segment at 215–235 (LLVLLGTVVMIFLCAWLMHNV) threads the bilayer. A topological domain (periplasmic) is located at residue K236. The helical transmembrane segment at 237–257 (IANLVLIVLSIVVTIFFFREA) threads the bilayer. At 258–267 (FRLDKTGRNK) the chain is on the cytoplasmic side. Residues 268–288 (MFVAFILMIEAVLFYILYAQM) traverse the membrane as a helical segment. Over 289-315 (PTSLNFFAINNVHHEILGFAINPVSFQ) the chain is Periplasmic. Residues 316–338 (ALNPFWVVVASPVLAAIYTRLGS) traverse the membrane as a helical segment. Topologically, residues 339-348 (KGKDLTMPMK) are cytoplasmic. The helical transmembrane segment at 349–369 (FTLGMFLCALGFLTAAAGMWF) threads the bilayer. The Periplasmic segment spans residues 370–379 (ADAQGLTSPW). Residues 380-400 (FIVLVYLFQSLGELLISALGL) traverse the membrane as a helical segment. Residues 401–410 (AMVAALVPQH) are Cytoplasmic-facing. The chain crosses the membrane as a helical span at residues 411–431 (LMGFILGMWFLTQAAAFLLGG). Topologically, residues 432 to 454 (YVATFTAVPENITDPLQTLPIYT) are periplasmic. Residues 455–475 (GVFSKIGLVTLAVTVVMAIMV) form a helical membrane-spanning segment. Residues 476-489 (PWLNRMINTPGTEQ) lie on the Cytoplasmic side of the membrane.

It belongs to the major facilitator superfamily. Proton-dependent oligopeptide transporter (POT/PTR) (TC 2.A.17) family. DtpB subfamily.

It localises to the cell inner membrane. Its function is as follows. Proton-dependent permease that transports di- and tripeptides. This chain is Dipeptide and tripeptide permease B, found in Salmonella typhimurium (strain LT2 / SGSC1412 / ATCC 700720).